Consider the following 375-residue polypeptide: Growth/differentiation factor 8 (375 aa).

The signal sequence occupies residues methionine 1–leucine 23. A propeptide spanning residues aspartate 24–arginine 266 is cleaved from the precursor. N-linked (GlcNAc...) asparagine glycosylation occurs at asparagine 71. Cystine bridges form between cysteine 272–cysteine 282, cysteine 281–cysteine 340, cysteine 309–cysteine 372, and cysteine 313–cysteine 374.

The protein belongs to the TGF-beta family. In terms of assembly, homodimer; disulfide-linked.

It is found in the secreted. Acts specifically as a negative regulator of skeletal muscle growth. The polypeptide is Growth/differentiation factor 8 (MSTN) (Coturnix coturnix (Common quail)).